Consider the following 353-residue polypeptide: UPF0283 membrane protein YcjF (353 aa).

The segment covering 1–19 (MSEPLKPRIDFAEPLKEEP) has biased composition (basic and acidic residues). The interval 1–35 (MSEPLKPRIDFAEPLKEEPTSAFKAQQTFSEAESR) is disordered. Transmembrane regions (helical) follow at residues 70–90 (MVMG…VQWT), 100–120 (VALG…GSVV), and 213–233 (ESTL…FIAW).

Belongs to the UPF0283 family.

Its subcellular location is the cell inner membrane. The sequence is that of UPF0283 membrane protein YcjF from Salmonella paratyphi A (strain AKU_12601).